The sequence spans 115 residues: Nucleoid-associated protein NATL1_00191 (115 aa).

The interval 89–115 (STSTMKERMEDLTGGFKLNLPGMGEES) is disordered.

This sequence belongs to the YbaB/EbfC family. Homodimer.

The protein localises to the cytoplasm. The protein resides in the nucleoid. Functionally, binds to DNA and alters its conformation. May be involved in regulation of gene expression, nucleoid organization and DNA protection. The protein is Nucleoid-associated protein NATL1_00191 of Prochlorococcus marinus (strain NATL1A).